A 688-amino-acid polypeptide reads, in one-letter code: Methionine--tRNA ligase (688 aa).

Positions 13–23 (PYANGNFHIGH) match the 'HIGH' region motif. Positions 144, 147, 157, and 160 each coordinate Zn(2+). The 'KMSKS' region signature appears at 342–346 (KMSKS). Residue Lys-345 coordinates ATP. Residues 582–688 (DFAKVDLRIA…PGAQPGMRIH (107 aa)) enclose the tRNA-binding domain.

It belongs to the class-I aminoacyl-tRNA synthetase family. MetG type 1 subfamily. In terms of assembly, homodimer. Zn(2+) serves as cofactor.

Its subcellular location is the cytoplasm. The enzyme catalyses tRNA(Met) + L-methionine + ATP = L-methionyl-tRNA(Met) + AMP + diphosphate. In terms of biological role, is required not only for elongation of protein synthesis but also for the initiation of all mRNA translation through initiator tRNA(fMet) aminoacylation. In Acidovorax ebreus (strain TPSY) (Diaphorobacter sp. (strain TPSY)), this protein is Methionine--tRNA ligase.